We begin with the raw amino-acid sequence, 253 residues long: 5'-nucleotidase SurE (253 aa).

Positions 8, 9, 39, and 92 each coordinate a divalent metal cation.

Belongs to the SurE nucleotidase family. It depends on a divalent metal cation as a cofactor.

It is found in the cytoplasm. It carries out the reaction a ribonucleoside 5'-phosphate + H2O = a ribonucleoside + phosphate. Nucleotidase that shows phosphatase activity on nucleoside 5'-monophosphates. In Burkholderia vietnamiensis (strain G4 / LMG 22486) (Burkholderia cepacia (strain R1808)), this protein is 5'-nucleotidase SurE.